We begin with the raw amino-acid sequence, 477 residues long: MEAVELARKLQEEATCSICLDYFTDPVMTTCGHNFCRACIQLSWEKARGKKGRRKRKGSFPCPECREMSPQRNLLPNRLLTKVAEMAQQHPGLQKQDLCQEHHEPLKLFCQKDQSPICVVCRESREHRLHRVLPAEEAVQGYKLKLEEDMEYLREQITRTGNLQAREEQSLAEWQGKVKERRERIVLEFEKMNLYLVEEEQRLLQALETEEEETASRLRESVACLDRQGHSLELLLLQLEERSTQGPLQMLQDMKEPLSRKNNVSVQCPEVAPPTRPRTVCRVPGQIEVLRGFLEDVVPDATSAYPYLLLYESRQRRYLGSSPEGSGFCSKDRFVAYPCAVGQTAFSSGRHYWEVGMNITGDALWALGVCRDNVSRKDRVPKCPENGFWVVQLSKGTKYLSTFSALTPVMLMEPPSHMGIFLDFEAGEVSFYSVSDGSHLHTYSQATFPGPLQPFFCLGAPKSGQMVISTVTMWVKG.

An RING-type zinc finger spans residues 16–66; the sequence is CSICLDYFTDPVMTTCGHNFCRACIQLSWEKARGKKGRRKRKGSFPCPECR. A B box-type zinc finger spans residues 94–135; the sequence is QKQDLCQEHHEPLKLFCQKDQSPICVVCRESREHRLHRVLPA. 4 residues coordinate Zn(2+): Cys-99, His-102, Cys-121, and His-127. The stretch at 135 to 223 forms a coiled coil; that stretch reads AEEAVQGYKL…TASRLRESVA (89 aa). Residues 277 to 475 enclose the B30.2/SPRY domain; sequence PRTVCRVPGQ…MVISTVTMWV (199 aa).

It belongs to the TRIM/RBCC family. As to quaternary structure, interacts (via coiled coil) with TRIM44 (via coiled coil). Interacts with TRIM28; this interaction prevents TRIM28 activity on BCL2A1. Interacts with TRIM41; this interaction prevents TRIM41 activity on ZSCAN2. Interacts with BECN1. Interacts with NFATC3 and NFATC4; these interactions prevent NFATC3 and NFATC4 nuclear localization. Auto-ubiquitinated. Almost exclusively in the testis.

Its subcellular location is the cytoplasm. It localises to the lysosome. The catalysed reaction is S-ubiquitinyl-[E2 ubiquitin-conjugating enzyme]-L-cysteine + [acceptor protein]-L-lysine = [E2 ubiquitin-conjugating enzyme]-L-cysteine + N(6)-ubiquitinyl-[acceptor protein]-L-lysine.. Its pathway is protein modification; protein ubiquitination. In terms of biological role, E3 ubiquitin ligase that plays important roles in the regulation of neuronal apoptosis, selective autophagy or cell proliferation. Stimulates the degradation of kinetochore ZW10 interacting protein ZWINT in a proteasome-dependent manner, leading to negative regulation of cell proliferation. Inhibits autophagic degradation of diverse known targets while contributing to autophagy of midbodies. Autophagy-inhibitory activity involves MCL1, which TRIM17 assembles into complexes with the key autophagy regulator BECN1. Controls neuronal apoptosis by mediating ubiquitination and degradation of MCL1 to initiate neuronal death. In addition, regulates NFAT transcription factors NFATC3 and NFATC4 activities by preventing their nuclear localization, thus inhibiting their transcriptional activities. Decreases TRIM41-mediated degradation of ZSCAN2 thereby stimulating alpha-synuclein/SNCA transcription in neuronal cells. Prevents the E3 ubiquitin-ligase activity of TRIM28 and its interaction with anti-apoptotic BCL2A1, blocking TRIM28 from ubiquitinating BCL2A1. The protein is E3 ubiquitin-protein ligase TRIM17 (TRIM17) of Homo sapiens (Human).